We begin with the raw amino-acid sequence, 395 residues long: Cytochrome b561 and DOMON domain-containing protein At5g47530 (395 aa).

Positions 1–24 (MAISSNLLLCLSLFIFIITKSALA) are cleaved as a signal peptide. Residues 47–162 (LDSFLHYTYD…GIINTVWQDG (116 aa)) enclose the DOMON domain. Residues 176–371 (GNNVRSVSTL…LEGFTWYVVI (196 aa)) enclose the Cytochrome b561 domain. The next 2 membrane-spanning stretches (helical) occupy residues 210–230 (IHGI…AIIA) and 242–262 (AWFY…VAGW). His-211, His-247, and His-280 together coordinate heme b. A helical membrane pass occupies residues 282-302 (AVGIALFCLATIQVFAMFLRP). His-316 is a binding site for heme b. 2 consecutive transmembrane segments (helical) span residues 318–338 (TVGY…LDIL) and 351–371 (IIVV…YVVI).

Heme b is required as a cofactor.

The protein resides in the membrane. Its function is as follows. May act as a catecholamine-responsive trans-membrane electron transporter. In Arabidopsis thaliana (Mouse-ear cress), this protein is Cytochrome b561 and DOMON domain-containing protein At5g47530.